A 340-amino-acid polypeptide reads, in one-letter code: uncharacterized protein (340 aa).

The span at 193–207 (KELPKEKKKSDGDKT) shows a compositional bias: basic and acidic residues. Positions 193–340 (KELPKEKKKS…FIPLQPKKKI (148 aa)) are disordered. Over residues 217–228 (FFGFWGHSGSKS) the composition is skewed to low complexity. Basic and acidic residues predominate over residues 235-244 (EKPIEAKNEI). Polar residues-rich tracts occupy residues 263-279 (SDKN…SDQQ) and 307-328 (PAQS…SLTL).

This is an uncharacterized protein from Saccharomyces cerevisiae (strain ATCC 204508 / S288c) (Baker's yeast).